The following is a 298-amino-acid chain: MKVFITGASGFIGSAVLSELISSGHEVVGLARSDEAAAKIKSIDPAAKILRGDLKDLEILKKGATESDGVIHLGFVHDFKNFEQCCEIDRQATVAMLESLKGSNKPFLYTNGTLSLRPNKVANEQDGIDEDSKILRAVTEQVALSYKDKGVSARIVRLPFSVHGKGDKAFVPILMNIAKAAGKSGYVGQGTNAWAAVHRLDTAPLFRLVLEKGKTGQVYHCVGEQGIPFKDIARVIGEILNVPVASIPVDDAESHFGFLTCFVTRDGPVSSEGTRKELGWQPQQIGLLEDIRANYSLN.

The protein belongs to the NAD(P)-dependent epimerase/dehydratase family.

This is an uncharacterized protein from Saccharomyces cerevisiae (strain ATCC 204508 / S288c) (Baker's yeast).